Here is a 196-residue protein sequence, read N- to C-terminus: Probable GTP-binding protein EngB (196 aa).

One can recognise an EngB-type G domain in the interval 22–193 (SLPEVAFVGR…LEEIRKAKGE (172 aa)). GTP contacts are provided by residues 30–37 (GRSNVGKS), 57–61 (GRTQL), 75–78 (DLPG), 142–145 (TKSD), and 172–174 (FSA). Mg(2+) contacts are provided by serine 37 and threonine 59.

The protein belongs to the TRAFAC class TrmE-Era-EngA-EngB-Septin-like GTPase superfamily. EngB GTPase family. Mg(2+) serves as cofactor.

Its function is as follows. Necessary for normal cell division and for the maintenance of normal septation. The polypeptide is Probable GTP-binding protein EngB (Syntrophus aciditrophicus (strain SB)).